The chain runs to 434 residues: Asparagine--tRNA ligase (434 aa).

Belongs to the class-II aminoacyl-tRNA synthetase family.

The protein localises to the cytoplasm. It catalyses the reaction tRNA(Asn) + L-asparagine + ATP = L-asparaginyl-tRNA(Asn) + AMP + diphosphate + H(+). This Pyrococcus furiosus (strain ATCC 43587 / DSM 3638 / JCM 8422 / Vc1) protein is Asparagine--tRNA ligase (asnS).